The primary structure comprises 273 residues: Release factor glutamine methyltransferase (273 aa).

Residues 109–113 (GTGSG), Asp132, Trp159, and Asn176 contribute to the S-adenosyl-L-methionine site. 176-179 (NPPY) is a substrate binding site.

This sequence belongs to the protein N5-glutamine methyltransferase family. PrmC subfamily.

It catalyses the reaction L-glutaminyl-[peptide chain release factor] + S-adenosyl-L-methionine = N(5)-methyl-L-glutaminyl-[peptide chain release factor] + S-adenosyl-L-homocysteine + H(+). In terms of biological role, methylates the class 1 translation termination release factors RF1/PrfA and RF2/PrfB on the glutamine residue of the universally conserved GGQ motif. The chain is Release factor glutamine methyltransferase from Neisseria gonorrhoeae (strain ATCC 700825 / FA 1090).